A 479-amino-acid chain; its full sequence is Leucine-rich repeat-containing protein 74A (479 aa).

The segment covering Met-1–Glu-10 has biased composition (acidic residues). The segment at Met-1–Thr-29 is disordered. 8 LRR repeats span residues Thr-119–Glu-140, Tyr-147–Ser-167, Ser-176–Gln-197, Arg-204–Gln-225, Gly-232–Asn-253, Thr-260–Asp-281, Cys-288–Lys-309, and Cys-316–Ile-336.

This Rattus norvegicus (Rat) protein is Leucine-rich repeat-containing protein 74A.